A 407-amino-acid chain; its full sequence is Accessory Sec system protein translocase subunit SecY2 (407 aa).

Transmembrane regions (helical) follow at residues F13–F33, L65–V85, M104–L124, T133–L153, A158–P178, I190–V210, I248–L268, P287–I307, F345–L365, and Y370–I390.

The protein belongs to the SecY/SEC61-alpha family. SecY2 subfamily. In terms of assembly, component of the accessory SecA2/SecY2 protein translocase complex required to export cell wall proteins. May form heterotrimers with SecE and SecG subunits.

The protein resides in the cell membrane. Its function is as follows. Part of the accessory SecA2/SecY2 system specifically required for export of possible cell wall proteins. The central subunit of a protein translocation channel. This is Accessory Sec system protein translocase subunit SecY2 from Streptococcus sanguinis (strain SK36).